A 343-amino-acid chain; its full sequence is RNA 3'-terminal phosphate cyclase (343 aa).

Residues Gln-102 and 284–288 (FLGDQ) each bind ATP. His-308 (tele-AMP-histidine intermediate) is an active-site residue.

The protein belongs to the RNA 3'-terminal cyclase family. Type 1 subfamily.

The protein localises to the cytoplasm. The enzyme catalyses a 3'-end 3'-phospho-ribonucleotide-RNA + ATP = a 3'-end 2',3'-cyclophospho-ribonucleotide-RNA + AMP + diphosphate. In terms of biological role, catalyzes the conversion of 3'-phosphate to a 2',3'-cyclic phosphodiester at the end of RNA. The mechanism of action of the enzyme occurs in 3 steps: (A) adenylation of the enzyme by ATP; (B) transfer of adenylate to an RNA-N3'P to produce RNA-N3'PP5'A; (C) and attack of the adjacent 2'-hydroxyl on the 3'-phosphorus in the diester linkage to produce the cyclic end product. The biological role of this enzyme is unknown but it is likely to function in some aspects of cellular RNA processing. In Thermococcus kodakarensis (strain ATCC BAA-918 / JCM 12380 / KOD1) (Pyrococcus kodakaraensis (strain KOD1)), this protein is RNA 3'-terminal phosphate cyclase (rtcA).